We begin with the raw amino-acid sequence, 245 residues long: Mannose/glucose-specific lectin (245 aa).

A carbohydrate contacts are provided by D87 and G107. A glycan (N-linked (GlcNAc...) asparagine) is linked at N119. E129 and D131 together coordinate Mn(2+). Ca(2+) contacts are provided by D131 and F133. S138 and N139 together coordinate a carbohydrate. Ca(2+)-binding residues include N139 and D142. The Mn(2+) site is built by D142 and H147. Positions 221, 222, and 223 each coordinate a carbohydrate.

Belongs to the leguminous lectin family. Homodimer.

In terms of biological role, mannose/glucose-specific lectin that also binds derivatives N-acetyl-D-glucosamine and alpha-methyl-D-mannopyranoside with even higher affinity. Has hemagglutinating activity towards rabbit erythrocytes. Is toxic towards brine shrimp A.nauplii. In rats, induces dose-dependent paw edema. This is Mannose/glucose-specific lectin from Centrolobium tomentosum (Arariba).